A 681-amino-acid chain; its full sequence is MKTTCLFISLILIQGIKTLPILEIASNNQPQNVDSVCSGTLQKTEDVHLMGFTLSGQKVADSPLEASKRWAFRTGVPPKNVEYTEGEEAKTCYNISVTDPSGKSLLLDPPTNIRDYPKCKTIHHIQGQNPHAQGIALHLWGAFFLYDRIASTTMYRGRVFTEGNIAAMIVNKTVHKMIFSRQGQGYRHMNLTSTNKYWTSNNGTQTNDTGCFGALQEYNSTKNQTCAPSKIPSPLPTARPEIKPTSTPTDATTLNTTDPNNDDEDLITSGSGSGEQEPYTTSDAVTKQGLSSTMPPTPSPQPSTPQQEGNNTDHSQGTVTEPNKTNTTAQPSMPPHNTTAISTNNTSKNNFSTLSVSLQNTTNYDTQSTATENEQTSAPSKTTLPPTGNLTTAKSTNNTKGPTTTAPNMTNGHLTSPSPTPNPTTQHLVYFRKKRSILWREGDMFPFLDGLINAPIDFDPVPNTKTIFDESSSSGASAEEDQHASPNISLTLSYFPNINENTAYSGENENDCDAELRIWSVQEDDLAAGLSWIPFFGPGIEGLYTAGLIKNQNNLVCRLRRLANQTAKSLELLLRVTTEERTFSLINRHAIDFLLTRWGGTCKVLGPDCCIGIEDLSRNISEQIDQIKKDEQKEGTGWGLGGKWWTSDWGVLTNLGILLLLSIAVLIALSCICRIFTKYIG.

Positions 1-18 are cleaved as a signal peptide; it reads MKTTCLFISLILIQGIKT. The Extracellular segment spans residues 19 to 648; sequence LPILEIASNN…GLGGKWWTSD (630 aa). A receptor-binding region spans residues 38-188; that stretch reads SGTLQKTEDV…FSRQGQGYRH (151 aa). N-linked (GlcNAc...) asparagine; by host glycans are attached at residues asparagine 94, asparagine 171, asparagine 190, asparagine 202, asparagine 207, asparagine 219, asparagine 223, and asparagine 255. Residues 223–351 form a disordered region; that stretch reads NQTCAPSKIP…STNNTSKNNF (129 aa). Low complexity predominate over residues 244 to 259; it reads PTSTPTDATTLNTTDP. Residues 277–455 are mucin-like region; the sequence is EPYTTSDAVT…PFLDGLINAP (179 aa). Polar residues-rich tracts occupy residues 278 to 290 and 308 to 341; these read PYTT…KQGL and EGNN…TTAI. N-linked (GlcNAc...) asparagine; by host glycosylation is found at asparagine 310, asparagine 323, asparagine 326, asparagine 337, asparagine 344, asparagine 345, asparagine 350, asparagine 360, asparagine 389, asparagine 397, asparagine 408, and asparagine 487. Residues 342 to 351 show a composition bias toward low complexity; the sequence is STNNTSKNNF. Over residues 366 to 414 the composition is skewed to polar residues; the sequence is TQSTATENEQTSAPSKTTLPPTGNLTTAKSTNNTKGPTTTAPNMTNGHL. The tract at residues 366-425 is disordered; that stretch reads TQSTATENEQTSAPSKTTLPPTGNLTTAKSTNNTKGPTTTAPNMTNGHLTSPSPTPNPTT. The tract at residues 529-549 is fusion peptide; that stretch reads GLSWIPFFGPGIEGLYTAGLI. Asparagine 564 and asparagine 619 each carry an N-linked (GlcNAc...) asparagine; by host glycan. Residues 649–669 form a helical membrane-spanning segment; that stretch reads WGVLTNLGILLLLSIAVLIAL. At 670–681 the chain is on the cytoplasmic side; that stretch reads SCICRIFTKYIG. 2 S-palmitoyl cysteine; by host lipidation sites follow: cysteine 671 and cysteine 673.

This sequence belongs to the filoviruses glycoprotein family. In terms of assembly, homotrimer; each monomer consists of a GP1 and a GP2 subunit linked by disulfide bonds. The resulting peplomers (GP1,2) protrude from the virus surface as spikes. GP1,2 interacts with human CD209 and CLEC4M (collectively referred to as DC-SIGN(R)). Asialoglycoprotein receptor (ASGP-R) may be a liver-specific receptor for GP1,2. Members of the Tyro3 receptor tyrosine kinase family may be cell entry factors interacting with GP1,2. N-glycosylated. In terms of processing, O-glycosylated in the mucin-like region. Post-translationally, specific enzymatic cleavages in vivo yield mature proteins. The precursor is processed into GP1 and GP2 by host cell furin in the trans Golgi, and maybe by other host proteases, to yield the mature GP1 and GP2 proteins. The cleavage site corresponds to the furin optimal cleavage sequence [KR]-X-[KR]-R. GP1 is phosphorylated on serine residues between residues 260 and 273.

Its subcellular location is the virion membrane. It is found in the host cell membrane. Functionally, GP1 is responsible for binding to the receptor(s) on target cells. Interacts with CD209/DC-SIGN and CLEC4M/DC-SIGNR which act as cofactors for virus entry into the host cell. Binding to CD209 and CLEC4M, which are respectively found on dendritic cells (DCs), and on endothelial cells of liver sinusoids and lymph node sinuses, facilitate infection of macrophages and endothelial cells. These interactions not only facilitate virus cell entry, but also allow capture of viral particles by DCs and subsequent transmission to susceptible cells without DCs infection (trans infection). GP2 acts as a class I viral fusion protein. Under the current model, the protein has at least 3 conformational states: pre-fusion native state, pre-hairpin intermediate state, and post-fusion hairpin state. During viral and target cell membrane fusion, the coiled coil regions (heptad repeats) assume a trimer-of-hairpins structure, positioning the fusion peptide in close proximity to the C-terminal region of the ectodomain. The formation of this structure appears to drive apposition and subsequent fusion of viral and target cell membranes. Responsible for penetration of the virus into the cell cytoplasm by mediating the fusion of the membrane of the endocytosed virus particle with the endosomal membrane. Low pH in endosomes induces an irreversible conformational change in GP2, releasing the fusion hydrophobic peptide. This is Envelope glycoprotein (GP) from Lake Victoria marburgvirus (strain Popp-67) (MARV).